The primary structure comprises 118 residues: UPF0251 protein TTE1845 (118 aa).

This sequence belongs to the UPF0251 family.

This Caldanaerobacter subterraneus subsp. tengcongensis (strain DSM 15242 / JCM 11007 / NBRC 100824 / MB4) (Thermoanaerobacter tengcongensis) protein is UPF0251 protein TTE1845.